Reading from the N-terminus, the 1936-residue chain is Potassium channel K1 (1936 aa).

The next 6 helical transmembrane spans lie at 175–195 (IIIL…YILL), 598–618 (VWII…LWAA), 643–663 (GYIE…GLYF), 670–690 (YIFS…SFIM), 701–721 (TYWF…AEST), and 734–754 (IIII…SGIM). The segment at residues 772-788 (FVYFGVITMSTVGYGDY) is an intramembrane region (pore-forming). The helical transmembrane segment at 791-811 (VTPAGKCLTMFIIVTCFTFVG) threads the bilayer. A coiled-coil region spans residues 1141-1185 (DTSSMINYKSKSRVNYKMVKGTKNEFIRNQNYNINSIYYANNDNM).

It localises to the membrane. The enzyme catalyses K(+)(in) = K(+)(out). With respect to regulation, partially inhibited by Ba(2+) and quinine. Probably insensitive to tetraethylammonium (TEA). Its function is as follows. Likely a predominant potassium channel in the erythrocytic stages of parasites. Mediates transmembrane potassium transport. Required for the development of oocysts in the mosquito midgut. The polypeptide is Potassium channel K1 (Plasmodium berghei (strain Anka)).